The sequence spans 211 residues: Protein-L-isoaspartate O-methyltransferase (211 aa).

Residue serine 62 is part of the active site.

The protein belongs to the methyltransferase superfamily. L-isoaspartyl/D-aspartyl protein methyltransferase family.

The protein resides in the cytoplasm. The catalysed reaction is [protein]-L-isoaspartate + S-adenosyl-L-methionine = [protein]-L-isoaspartate alpha-methyl ester + S-adenosyl-L-homocysteine. Catalyzes the methyl esterification of L-isoaspartyl residues in peptides and proteins that result from spontaneous decomposition of normal L-aspartyl and L-asparaginyl residues. It plays a role in the repair and/or degradation of damaged proteins. This Shewanella amazonensis (strain ATCC BAA-1098 / SB2B) protein is Protein-L-isoaspartate O-methyltransferase.